Reading from the N-terminus, the 488-residue chain is GTPase Der (488 aa).

2 EngA-type G domains span residues 3–166 and 199–372; these read PVVA…AEAM and IKLA…DSAT. GTP-binding positions include 9–16, 56–60, 118–121, 205–212, 252–256, and 317–320; these read GRPNVGKS, DTGGI, NKVD, GKPNVGKS, DTAGV, and NKWD. The KH-like domain occupies 373–457; sequence RRVSTSMLTR…PIQLRFQEGD (85 aa). The interval 460 to 488 is disordered; the sequence is FENKTEKLTMSQERRRKRAQSHIKDRKTK. Basic residues predominate over residues 473–488; that stretch reads RRRKRAQSHIKDRKTK.

It belongs to the TRAFAC class TrmE-Era-EngA-EngB-Septin-like GTPase superfamily. EngA (Der) GTPase family. Associates with the 50S ribosomal subunit.

In terms of biological role, GTPase that plays an essential role in the late steps of ribosome biogenesis. This is GTPase Der from Shewanella baltica (strain OS223).